Reading from the N-terminus, the 479-residue chain is Citrate synthase, mitochondrial (479 aa).

The transit peptide at 1-37 directs the protein to the mitochondrion; the sequence is MSAILSTTSKSFLSRGSTRQCQNMQKALFALLNARHY. Active-site residues include His-312, His-358, and Asp-413. Ser-462 carries the phosphoserine modification.

This sequence belongs to the citrate synthase family. In terms of assembly, monomer and homodimer. Exists as an inactive monomer when phosphorylated. Homodimerization is dependent on dephosphorylation of Ser-462 by PTC7 and is required for activity. In terms of processing, phosphorylation at Ser-462. Dephosphorylated at Ser-462 by PTC7.

The protein resides in the mitochondrion matrix. The catalysed reaction is oxaloacetate + acetyl-CoA + H2O = citrate + CoA + H(+). The protein operates within carbohydrate metabolism; tricarboxylic acid cycle; isocitrate from oxaloacetate: step 1/2. Its activity is regulated as follows. Phosphorylation at Ser-462 inhibits catalytic activity. Dephosphorylation at Ser-462 by PTC7 enhances catalytic activity. Specific citrate synthase with catalytic activity only with acetyl-CoA. The chain is Citrate synthase, mitochondrial from Saccharomyces cerevisiae (strain ATCC 204508 / S288c) (Baker's yeast).